The primary structure comprises 62 residues: Short neurotoxin A (62 aa).

A compositionally biased stretch (polar residues) spans 1–16 (RRCFNHPSSQPQTNKS). The segment at 1–21 (RRCFNHPSSQPQTNKSCPPGE) is disordered. 4 cysteine pairs are disulfide-bonded: C3-C24, C17-C41, C43-C54, and C55-C60.

Belongs to the three-finger toxin family. Short-chain subfamily. Type I alpha-neurotoxin sub-subfamily. As to expression, expressed by the venom gland.

It localises to the secreted. Binds to muscle nicotinic acetylcholine receptor (nAChR) and inhibit acetylcholine from binding to the receptor, thereby impairing neuromuscular transmission. The chain is Short neurotoxin A from Laticauda crockeri (Crocker's sea snake).